Here is a 387-residue protein sequence, read N- to C-terminus: Alpha-sarcoglycan (387 aa).

The first 23 residues, 1 to 23 (MAETLFWTPLLVVLLAGLGDTEA), serve as a signal peptide directing secretion. Residues 24 to 290 (QQTTLHPLVG…APDRDFLVDA (267 aa)) are Extracellular-facing. Residues N174 and N246 are each glycosylated (N-linked (GlcNAc...) asparagine). A helical membrane pass occupies residues 291–311 (LVTLLVPLLVALLLTLLLAYV). At 312–387 (MCCRREGRLK…AQVPLILDQH (76 aa)) the chain is on the cytoplasmic side. S377 is modified (phosphoserine).

This sequence belongs to the sarcoglycan alpha/epsilon family. As to quaternary structure, interacts with the syntrophin SNTA1. Cross-link to form 2 major subcomplexes: one consisting of SGCB, SGCD and SGCG and the other consisting of SGCB and SGCD. The association between SGCB and SGCG is particularly strong while SGCA is loosely associated with the other sarcoglycans. In terms of tissue distribution, most strongly expressed in skeletal muscle. Also expressed in cardiac muscle and, at much lower levels, in lung. In the fetus, most abundant in cardiac muscle and, at lower levels, in lung. Also detected in liver and kidney. Not expressed in brain.

It localises to the cell membrane. The protein resides in the sarcolemma. The protein localises to the cytoplasm. Its subcellular location is the cytoskeleton. Functionally, component of the sarcoglycan complex, a subcomplex of the dystrophin-glycoprotein complex which forms a link between the F-actin cytoskeleton and the extracellular matrix. This is Alpha-sarcoglycan (SGCA) from Homo sapiens (Human).